Here is a 119-residue protein sequence, read N- to C-terminus: Large ribosomal subunit protein bL20 (119 aa).

This sequence belongs to the bacterial ribosomal protein bL20 family.

Binds directly to 23S ribosomal RNA and is necessary for the in vitro assembly process of the 50S ribosomal subunit. It is not involved in the protein synthesizing functions of that subunit. The chain is Large ribosomal subunit protein bL20 from Rhodopseudomonas palustris (strain BisB5).